Reading from the N-terminus, the 192-residue chain is 7-methyl-GTP pyrophosphatase (192 aa).

D70 serves as the catalytic Proton acceptor.

It belongs to the Maf family. YceF subfamily. It depends on a divalent metal cation as a cofactor.

It localises to the cytoplasm. It catalyses the reaction N(7)-methyl-GTP + H2O = N(7)-methyl-GMP + diphosphate + H(+). Nucleoside triphosphate pyrophosphatase that hydrolyzes 7-methyl-GTP (m(7)GTP). May have a dual role in cell division arrest and in preventing the incorporation of modified nucleotides into cellular nucleic acids. This is 7-methyl-GTP pyrophosphatase from Xanthomonas campestris pv. campestris (strain 8004).